A 179-amino-acid chain; its full sequence is Natural killer cells antigen CD94 (179 aa).

The Cytoplasmic portion of the chain corresponds to 1–10; it reads MAVSQTTLWN. A helical; Signal-anchor for type II membrane protein membrane pass occupies residues 11-31; sequence LISGILGVICLLLMTTMGILL. The Extracellular segment spans residues 32-179; it reads KNLLLTESIQ…SRFICKQELM (148 aa). 4 disulfide bridges follow: C58/C70, C61/C72, C89/C174, and C152/C166. Residues 68-175 enclose the C-type lectin domain; the sequence is HQCNCYLFFD…CEDKSRFICK (108 aa). N-linked (GlcNAc...) asparagine glycosylation is found at N93 and N125.

In terms of assembly, can form disulfide-bonded heterodimer with NKG2 family members KLRC1 and KLRC2. KLRD1-KLRC1 heterodimer interacts with peptide-bound MHC-E-B2M heterotrimeric complex. KLRD1 plays a prominent role in directly interacting with MHC-E. KLRD1-KLRC1 interacts with much higher affinity with peptide-bound MHC-E-B2M than KLRD1-KLRC2. Interacts with the adapter protein TYROBP/DAP12; this interaction is required for cell surface expression and cell activation.

It localises to the cell membrane. Immune receptor involved in self-nonself discrimination. In complex with KLRC1 or KLRC2 on cytotoxic and regulatory lymphocyte subsets, recognizes non-classical major histocompatibility (MHC) class Ib molecule MHC-E loaded with self-peptides derived from the signal sequence of classical MHC class Ia and non-classical MHC class Ib molecules. Enables cytotoxic cells to monitor the expression of MHC class I molecules in healthy cells and to tolerate self. Primarily functions as a ligand binding subunit as it lacks the capacity to signal. Its function is as follows. KLRD1-KLRC1 acts as an immune inhibitory receptor. Key inhibitory receptor on natural killer (NK) cells that regulates their activation and effector functions. Dominantly counteracts T cell receptor signaling on a subset of memory/effector CD8-positive T cells as part of an antigen-driven response to avoid autoimmunity. On intraepithelial CD8-positive gamma-delta regulatory T cells triggers TGFB1 secretion, which in turn limits the cytotoxic programming of intraepithelial CD8-positive alpha-beta T cells, distinguishing harmless from pathogenic antigens. In MHC-E-rich tumor microenvironment, acts as an immune inhibitory checkpoint and may contribute to progressive loss of effector functions of NK cells and tumor-specific T cells, a state known as cell exhaustion. Upon MHC-E-peptide binding, transmits intracellular signals through KLRC1 immunoreceptor tyrosine-based inhibition motifs (ITIMs) by recruiting INPP5D/SHIP-1 and INPPL1/SHIP-2 tyrosine phosphatases to ITIMs, and ultimately opposing signals transmitted by activating receptors through dephosphorylation of proximal signaling molecules. Functionally, KLRD1-KLRC2 acts as an immune activating receptor. On cytotoxic lymphocyte subsets recognizes MHC-E loaded with signal sequence-derived peptides from non-classical MHC class Ib MHC-G molecules, likely playing a role in the generation and effector functions of adaptive NK cells and in maternal-fetal tolerance during pregnancy. Regulates the effector functions of terminally differentiated cytotoxic lymphocyte subsets, and in particular may play a role in adaptive NK cell response to viral infection. Upon MHC-E-peptide binding, transmits intracellular signals via the adapter protein TYROBP/DAP12, triggering the phosphorylation of proximal signaling molecules and cell activation. This is Natural killer cells antigen CD94 (KLRD1) from Canis lupus familiaris (Dog).